We begin with the raw amino-acid sequence, 542 residues long: GMP synthase [glutamine-hydrolyzing] (542 aa).

A Glutamine amidotransferase type-1 domain is found at 28-218 (MIVILDFGSQ…VYHICECEPT (191 aa)). The Nucleophile role is filled by Cys-105. Catalysis depends on residues His-192 and Glu-194. In terms of domain architecture, GMPS ATP-PPase spans 219-417 (WTTEAFVEEA…IGLPEEIVRR (199 aa)). 246–252 (SGGVDSS) is an ATP binding site.

Homodimer.

It catalyses the reaction XMP + L-glutamine + ATP + H2O = GMP + L-glutamate + AMP + diphosphate + 2 H(+). It functions in the pathway purine metabolism; GMP biosynthesis; GMP from XMP (L-Gln route): step 1/1. Functionally, catalyzes the synthesis of GMP from XMP. This chain is GMP synthase [glutamine-hydrolyzing], found in Gloeothece citriformis (strain PCC 7424) (Cyanothece sp. (strain PCC 7424)).